The sequence spans 241 residues: MTCCGCSGGCGSSCGGCGCSGGCGSSCGGCGSSCCCKPVCCCKPVCCCVPACSCSSCGGCKGGCGSCGGCKGSCGSCGGCKGGCGSCGGCGSCGGCKPSCCQSSCCKPCCCQSSCCKPCCSSGCGSSCCQSSCCKPCCCQSSCCKPCCSSGCGSSCCQSSCCKPCCCQSSCCKPCCCQSSCCKPCCCQSSCCKPCCCQSSCCKPCCCQSSCCKPCCCQSSCCKPCCCQSSCCAPVCCQCKI.

Repeat copies occupy residues Cys35–Pro38, Cys41–Pro44, Cys47–Pro50, Cys105–Pro108, Cys115–Pro118, Cys133–Pro136, Cys143–Pro146, Cys161–Pro164, Cys171–Pro174, Cys181–Pro184, Cys191–Pro194, Cys201–Pro204, Cys211–Pro214, Cys221–Pro224, and Cys231–Pro234. Positions Cys35–Pro234 are 15 X 4 AA repeats of C-C-X-P.

The protein belongs to the KRTAP type 5 family. As to quaternary structure, interacts with hair keratins.

Functionally, in the hair cortex, hair keratin intermediate filaments are embedded in an interfilamentous matrix, consisting of hair keratin-associated protein (KRTAP), which are essential for the formation of a rigid and resistant hair shaft through their extensive disulfide bond cross-linking with abundant cysteine residues of hair keratins. The matrix proteins include the high-sulfur and high-glycine-tyrosine keratins. The chain is Keratin-associated protein 5-5 from Mus musculus (Mouse).